Here is a 214-residue protein sequence, read N- to C-terminus: Cytochrome c biogenesis ATP-binding export protein CcmA (214 aa).

The ABC transporter domain occupies 8-212 (LYAADLACLK…PPTVLDLSEV (205 aa)). An ATP-binding site is contributed by 40–47 (GPNGFGKT).

This sequence belongs to the ABC transporter superfamily. CcmA exporter (TC 3.A.1.107) family. As to quaternary structure, the complex is composed of two ATP-binding proteins (CcmA) and two transmembrane proteins (CcmB).

The protein localises to the cell inner membrane. The catalysed reaction is heme b(in) + ATP + H2O = heme b(out) + ADP + phosphate + H(+). Part of the ABC transporter complex CcmAB involved in the biogenesis of c-type cytochromes; once thought to export heme, this seems not to be the case, but its exact role is uncertain. Responsible for energy coupling to the transport system. This chain is Cytochrome c biogenesis ATP-binding export protein CcmA, found in Aromatoleum aromaticum (strain DSM 19018 / LMG 30748 / EbN1) (Azoarcus sp. (strain EbN1)).